Consider the following 391-residue polypeptide: S-adenosylmethionine synthase (391 aa).

Position 14 (His-14) interacts with ATP. Asp-16 is a Mg(2+) binding site. Glu-42 contacts K(+). Positions 55 and 98 each coordinate L-methionine. Residues 98 to 108 (QSPDIAMGVDE) are flexible loop. ATP-binding positions include 172–174 (DGK), 238–239 (RF), Asp-247, 253–254 (RK), Ala-270, and Lys-274. Asp-247 provides a ligand contact to L-methionine. Lys-278 serves as a coordination point for L-methionine.

The protein belongs to the AdoMet synthase family. Homotetramer; dimer of dimers. Mg(2+) serves as cofactor. The cofactor is K(+).

It localises to the cytoplasm. The catalysed reaction is L-methionine + ATP + H2O = S-adenosyl-L-methionine + phosphate + diphosphate. The protein operates within amino-acid biosynthesis; S-adenosyl-L-methionine biosynthesis; S-adenosyl-L-methionine from L-methionine: step 1/1. Functionally, catalyzes the formation of S-adenosylmethionine (AdoMet) from methionine and ATP. The overall synthetic reaction is composed of two sequential steps, AdoMet formation and the subsequent tripolyphosphate hydrolysis which occurs prior to release of AdoMet from the enzyme. This is S-adenosylmethionine synthase from Clostridium tetani (strain Massachusetts / E88).